Reading from the N-terminus, the 345-residue chain is Tropomodulin-4 (345 aa).

Disordered regions lie at residues 40 to 64 (PENM…GPLD) and 326 to 345 (ARAA…QKKR). Positions 336 to 345 (NELRRQQKKR) are enriched in basic and acidic residues.

Belongs to the tropomodulin family. Binds to the N-terminus of tropomyosin and to actin.

The protein resides in the cytoplasm. The protein localises to the cytoskeleton. Its function is as follows. Blocks the elongation and depolymerization of the actin filaments at the pointed end. The Tmod/TM complex contributes to the formation of the short actin protofilament, which in turn defines the geometry of the membrane skeleton. The protein is Tropomodulin-4 (Tmod4) of Mus musculus (Mouse).